Reading from the N-terminus, the 68-residue chain is Metallothionein (68 aa).

This sequence belongs to the metallothionein superfamily. Type 4 family.

Functionally, metallothioneins have a high content of cysteine residues that bind various heavy metals. In Lytechinus pictus (Painted sea urchin), this protein is Metallothionein (MT1).